The following is a 606-amino-acid chain: Proton myo-inositol cotransporter hmit-1.1 (606 aa).

Over 1 to 20 the chain is Cytoplasmic; that stretch reads MVAVAAFSSSGQDKPAHTPK. A helical membrane pass occupies residues 21 to 41; that stretch reads LGLFVYILAAASVIGGFLFGY. Residues 42 to 63 lie on the Extracellular side of the membrane; it reads DTSVVSAAMLYMPDAPGLKPMD. The chain crosses the membrane as a helical span at residues 64 to 84; that stretch reads TVWQEVLVSISPGMAAVGSLM. Over 85–96 the chain is Cytoplasmic; it reads SGTSSDYIGRRK. A helical membrane pass occupies residues 97 to 117; the sequence is VILGASAIFTIGALVCAASVN. Lys118 is a topological domain (extracellular). The chain crosses the membrane as a helical span at residues 119-139; that stretch reads IMLLVGRVLLGIAIGFASMIV. The Cytoplasmic portion of the chain corresponds to 140–152; the sequence is PVYLGETAPTHVR. The chain crosses the membrane as a helical span at residues 153–173; sequence GMLVAAFALMISFGQVVANIT. The Extracellular segment spans residues 174–188; that stretch reads GGAFSYIDPYNVGWR. Residues 189–209 form a helical membrane-spanning segment; it reads LMFAFAAVPSIIQFVCFMFLP. Residues 210-278 lie on the Cytoplasmic side of the membrane; that stretch reads ETPRWLYENG…RILKTPHVLK (69 aa). Residues 279-299 traverse the membrane as a helical segment; the sequence is ACFIGSMLQAFQQLAGINTIL. Topologically, residues 300–317 are extracellular; it reads YYTADIIRSSGISNNHTT. An N-linked (GlcNAc...) asparagine glycan is attached at Asn314. A helical transmembrane segment spans residues 318–338; the sequence is IWISVLLSLCNFIGPFVPMSL. At 339-345 the chain is on the cytoplasmic side; it reads IEKVGRR. A helical membrane pass occupies residues 346 to 366; that stretch reads IIFLFSCGLVVLSLVFIGVAF. The Extracellular portion of the chain corresponds to 367 to 464; that stretch reads LLVNHDSAAT…EKYYCDTKYT (98 aa). 2 N-linked (GlcNAc...) asparagine glycosylation sites follow: Asn387 and Asn445. Residues 465-485 traverse the membrane as a helical segment; it reads LLPIIACGVYLLTFSSGFTSL. Over 486-501 the chain is Cytoplasmic; the sequence is PWVLNSEFYPMWARST. The chain crosses the membrane as a helical span at residues 502-522; it reads CVAISTTSNWVFNLIIALTYL. Residues 523–531 lie on the Extracellular side of the membrane; it reads SLTQVIGKY. A helical membrane pass occupies residues 532–552; the sequence is GAFWLYAGLTVIAFIFILFLV. The Cytoplasmic portion of the chain corresponds to 553–606; the sequence is PETKGYSIEEVEMLFMNKKQRREAESRRRETVTEVRSRMNSTVSFGQHNEVHKY.

Belongs to the major facilitator superfamily. Sugar transporter (TC 2.A.1.1) family. Expressed in the intestine.

It localises to the cell membrane. It carries out the reaction myo-inositol(out) + H(+)(out) = myo-inositol(in) + H(+)(in). In terms of biological role, h(+)-myo-inositol cotransporter. Probably by promoting the transport of myo-inositol regulates intracellular osmosis in response to hyperosmotic stress. The polypeptide is Proton myo-inositol cotransporter hmit-1.1 (Caenorhabditis elegans).